We begin with the raw amino-acid sequence, 253 residues long: Endonuclease NucS (253 aa).

The disordered stretch occupies residues 63-91 (IDDPDTDFTDGSSVGNSEEQGTDGSAHTA). Residues 71 to 87 (TDGSSVGNSEEQGTDGS) show a composition bias toward polar residues.

Belongs to the NucS endonuclease family.

Its subcellular location is the cytoplasm. In terms of biological role, cleaves both 3' and 5' ssDNA extremities of branched DNA structures. The polypeptide is Endonuclease NucS (Corynebacterium kroppenstedtii (strain DSM 44385 / JCM 11950 / CIP 105744 / CCUG 35717)).